A 317-amino-acid polypeptide reads, in one-letter code: Acetyl-coenzyme A carboxylase carboxyl transferase subunit alpha (317 aa).

One can recognise a CoA carboxyltransferase C-terminal domain in the interval K39–A293.

This sequence belongs to the AccA family. Acetyl-CoA carboxylase is a heterohexamer composed of biotin carboxyl carrier protein (AccB), biotin carboxylase (AccC) and two subunits each of ACCase subunit alpha (AccA) and ACCase subunit beta (AccD).

It is found in the cytoplasm. The enzyme catalyses N(6)-carboxybiotinyl-L-lysyl-[protein] + acetyl-CoA = N(6)-biotinyl-L-lysyl-[protein] + malonyl-CoA. It participates in lipid metabolism; malonyl-CoA biosynthesis; malonyl-CoA from acetyl-CoA: step 1/1. Component of the acetyl coenzyme A carboxylase (ACC) complex. First, biotin carboxylase catalyzes the carboxylation of biotin on its carrier protein (BCCP) and then the CO(2) group is transferred by the carboxyltransferase to acetyl-CoA to form malonyl-CoA. This is Acetyl-coenzyme A carboxylase carboxyl transferase subunit alpha from Beijerinckia indica subsp. indica (strain ATCC 9039 / DSM 1715 / NCIMB 8712).